A 186-amino-acid chain; its full sequence is Large ribosomal subunit protein uL5 (186 aa).

Belongs to the universal ribosomal protein uL5 family. In terms of assembly, part of the 50S ribosomal subunit; part of the 5S rRNA/L5/L18/L25 subcomplex. Contacts the 5S rRNA and the P site tRNA. Forms a bridge to the 30S subunit in the 70S ribosome.

Its function is as follows. This is one of the proteins that bind and probably mediate the attachment of the 5S RNA into the large ribosomal subunit, where it forms part of the central protuberance. In the 70S ribosome it contacts protein S13 of the 30S subunit (bridge B1b), connecting the 2 subunits; this bridge is implicated in subunit movement. Contacts the P site tRNA; the 5S rRNA and some of its associated proteins might help stabilize positioning of ribosome-bound tRNAs. The chain is Large ribosomal subunit protein uL5 from Cereibacter sphaeroides (strain ATCC 17029 / ATH 2.4.9) (Rhodobacter sphaeroides).